Here is a 467-residue protein sequence, read N- to C-terminus: Asparagine--tRNA ligase (467 aa).

This sequence belongs to the class-II aminoacyl-tRNA synthetase family. In terms of assembly, homodimer.

It localises to the cytoplasm. It catalyses the reaction tRNA(Asn) + L-asparagine + ATP = L-asparaginyl-tRNA(Asn) + AMP + diphosphate + H(+). The sequence is that of Asparagine--tRNA ligase from Mannheimia succiniciproducens (strain KCTC 0769BP / MBEL55E).